The primary structure comprises 596 residues: A-type ATP synthase subunit A (596 aa).

241 to 248 (GPFGSGKT) lines the ATP pocket.

Belongs to the ATPase alpha/beta chains family. In terms of assembly, has multiple subunits with at least A(3), B(3), C, D, E, F, H, I and proteolipid K(x).

It localises to the cell membrane. The catalysed reaction is ATP + H2O + 4 H(+)(in) = ADP + phosphate + 5 H(+)(out). Functionally, component of the A-type ATP synthase that produces ATP from ADP in the presence of a proton gradient across the membrane. The A chain is the catalytic subunit. The polypeptide is A-type ATP synthase subunit A (Ignicoccus hospitalis (strain KIN4/I / DSM 18386 / JCM 14125)).